The primary structure comprises 137 residues: Protein phosphatase 1 regulatory subunit 1B (137 aa).

The interval 1 to 137 is disordered; it reads DPKDRKKIQF…EEEEEEEDSQ (137 aa). Phosphothreonine; by PKA is present on T33. The span at 40 to 62 shows a compositional bias: basic and acidic residues; that stretch reads LXEHSSPEEEASPHQRAAGEGHH. Phosphoserine occurs at positions 44 and 45. T74 is subject to Phosphothreonine; by CDK5. Residues 88 to 99 are compositionally biased toward polar residues; that stretch reads HLQSISNLGENQ. A Phosphoserine modification is found at S101. Residues 108 to 117 are compositionally biased toward basic and acidic residues; the sequence is GELRELGYPR. Residues 118–137 are compositionally biased toward acidic residues; sequence EEEEEEEEDDEEEEEEEDSQ. S136 bears the Phosphoserine mark.

This sequence belongs to the protein phosphatase inhibitor 1 family. Post-translationally, phosphorylation of Thr-33 is required for activity. Dopamine- and cyclic AMP-regulated neuronal phosphoprotein.

It localises to the cytoplasm. Inhibitor of protein-phosphatase 1. This Sus scrofa (Pig) protein is Protein phosphatase 1 regulatory subunit 1B (PPP1R1B).